A 252-amino-acid chain; its full sequence is Glycine-rich cell wall structural protein 1.0 (252 aa).

The signal sequence occupies residues 1-30 (MATSKVLLSNVLFVFVCFGICSAARTLLTL). The tract at residues 231–252 (GSGYGGGGGSGEGGGHGGGYYP) is disordered.

Expressed in young hypocotyls.

It is found in the secreted. The protein resides in the cell wall. Its function is as follows. Responsible for plasticity of the cell wall. The protein is Glycine-rich cell wall structural protein 1.0 of Phaseolus vulgaris (Kidney bean).